Reading from the N-terminus, the 189-residue chain is Nucleolar protein 16 (189 aa).

Basic residues predominate over residues 1-33 (MARDVKKRGKPAYTNRRNRQKYLKKKDNKKKLS). The segment at 1–34 (MARDVKKRGKPAYTNRRNRQKYLKKKDNKKKLSK) is disordered.

The protein belongs to the NOP16 family.

It is found in the nucleus. Its subcellular location is the nucleolus. The sequence is that of Nucleolar protein 16 from Caenorhabditis elegans.